We begin with the raw amino-acid sequence, 160 residues long: Large ribosomal subunit protein uL15 (160 aa).

Basic and acidic residues predominate over residues 1–13; sequence MKLHELSDNDGAA. A disordered region spans residues 1–42; it reads MKLHELSDNDGAAKKRKRVGRGPGSGTGKMGGRGIKGQKSRS. The segment covering 21 to 35 has biased composition (gly residues); the sequence is RGPGSGTGKMGGRGI.

Belongs to the universal ribosomal protein uL15 family. In terms of assembly, part of the 50S ribosomal subunit.

In terms of biological role, binds to the 23S rRNA. The protein is Large ribosomal subunit protein uL15 of Roseobacter denitrificans (strain ATCC 33942 / OCh 114) (Erythrobacter sp. (strain OCh 114)).